Consider the following 300-residue polypeptide: Ribosomal protein L11 methyltransferase (300 aa).

The S-adenosyl-L-methionine site is built by Thr-152, Gly-173, Asp-195, and Asn-234.

This sequence belongs to the methyltransferase superfamily. PrmA family.

It is found in the cytoplasm. It catalyses the reaction L-lysyl-[protein] + 3 S-adenosyl-L-methionine = N(6),N(6),N(6)-trimethyl-L-lysyl-[protein] + 3 S-adenosyl-L-homocysteine + 3 H(+). Methylates ribosomal protein L11. This is Ribosomal protein L11 methyltransferase from Burkholderia cenocepacia (strain HI2424).